Reading from the N-terminus, the 279-residue chain is Acetyl-coenzyme A carboxylase carboxyl transferase subunit beta (279 aa).

The 257-residue stretch at 23 to 279 (LWWKCEECGA…LVTLFSMLKV (257 aa)) folds into the CoA carboxyltransferase N-terminal domain. Positions 27, 30, 46, and 49 each coordinate Zn(2+). A C4-type zinc finger spans residues 27 to 49 (CEECGAMLHKKQFEDHFFTCAEC).

The protein belongs to the AccD/PCCB family. Acetyl-CoA carboxylase is a heterohexamer composed of biotin carboxyl carrier protein (AccB), biotin carboxylase (AccC) and two subunits each of ACCase subunit alpha (AccA) and ACCase subunit beta (AccD). Zn(2+) serves as cofactor.

The protein localises to the cytoplasm. The enzyme catalyses N(6)-carboxybiotinyl-L-lysyl-[protein] + acetyl-CoA = N(6)-biotinyl-L-lysyl-[protein] + malonyl-CoA. Its pathway is lipid metabolism; malonyl-CoA biosynthesis; malonyl-CoA from acetyl-CoA: step 1/1. Component of the acetyl coenzyme A carboxylase (ACC) complex. Biotin carboxylase (BC) catalyzes the carboxylation of biotin on its carrier protein (BCCP) and then the CO(2) group is transferred by the transcarboxylase to acetyl-CoA to form malonyl-CoA. The protein is Acetyl-coenzyme A carboxylase carboxyl transferase subunit beta of Pelodictyon phaeoclathratiforme (strain DSM 5477 / BU-1).